The following is a 286-amino-acid chain: Probable ketoamine kinase EAE_16955 (286 aa).

92-94 (EYL) is a binding site for ATP. D194 functions as the Proton acceptor in the catalytic mechanism.

The protein belongs to the fructosamine kinase family.

Ketoamine kinase that phosphorylates ketoamines on the third carbon of the sugar moiety to generate ketoamine 3-phosphate. The sequence is that of Probable ketoamine kinase EAE_16955 from Klebsiella aerogenes (strain ATCC 13048 / DSM 30053 / CCUG 1429 / JCM 1235 / KCTC 2190 / NBRC 13534 / NCIMB 10102 / NCTC 10006 / CDC 819-56) (Enterobacter aerogenes).